The primary structure comprises 294 residues: Survival motor neuron protein (294 aa).

Over residues 1–10 the composition is skewed to gly residues; it reads MAMSSGGSGS. The interval 1 to 32 is disordered; that stretch reads MAMSSGGSGSGVPEQEDAVLFRRGTGQSDDSD. N-acetylalanine is present on Ala-2. Phosphoserine; by PKA is present on residues Ser-4, Ser-5, and Ser-8. Residues 13–44 are P1 (binding site for GEMIN2); the sequence is PEQEDAVLFRRGTGQSDDSDIWDDTALIKAYD. Thr-25 carries the post-translational modification Phosphothreonine. Phosphoserine occurs at positions 28 and 31. Lys-51 participates in a covalent cross-link: Glycyl lysine isopeptide (Lys-Gly) (interchain with G-Cter in SUMO2). Residues 60 to 88 are disordered; the sequence is CETSGKSKTTPKRKPAKKNKSQKKNTAAS. Over residues 68 to 82 the composition is skewed to basic residues; sequence TTPKRKPAKKNKSQK. Position 69 is a phosphothreonine (Thr-69). Residue Thr-85 is modified to Phosphothreonine; by PKA. The Tudor domain occupies 91-151; that stretch reads QWKVGDKCSA…LSPICEVANN (61 aa). The segment at 97–209 is required for interaction with RPP20/POP7; the sequence is KCSAIWSEDG…MPGPRLGPGK (113 aa). Residues 156–166 are compositionally biased toward low complexity; the sequence is AQENENESQVS. The segment at 156 to 222 is disordered; the sequence is AQENENESQV…KFNGPPPPPP (67 aa). Ser-187 carries the post-translational modification Phosphoserine; by PKA. Pro residues predominate over residues 194-204; that stretch reads LPPPPPMPGPR. Residues 206–215 are compositionally biased toward low complexity; sequence GPGKPGLKFN. A Glycyl lysine isopeptide (Lys-Gly) (interchain with G-Cter in SUMO2) cross-link involves residue Lys-209. The tract at residues 240 to 267 is P2 (binding site for SM B); sequence PPIIPPPPPICPDSLDDADALGSMLISW. The segment at 279 to 294 is required for interaction with SYNCRIP; the sequence is GFRQNQKEGRCSHSLN.

It belongs to the SMN family. Homooligomer; may form higher order homooligomers in the dimer to octamer range. Part of the core SMN complex that contains SMN1, GEMIN2/SIP1, DDX20/GEMIN3, GEMIN4, GEMIN5, GEMIN6, GEMIN7, GEMIN8 and STRAP/UNRIP. Part of the SMN-Sm complex that contains SMN1, GEMIN2/SIP1, DDX20/GEMIN3, GEMIN4, GEMIN5, GEMIN6, GEMIN7, GEMIN8, STRAP/UNRIP and the Sm proteins SNRPB, SNRPD1, SNRPD2, SNRPD3, SNRPE, SNRPF and SNRPG. Component of an import snRNP complex composed of KPNB1, RNUT1, SMN1 and ZNF259. Interacts with DDX20, FBL, NOLA1, RNUT1, SYNCRIP and with several spliceosomal snRNP core Sm proteins, including SNRPB, SNRPD1, SNRPD2, SNRPD3, SNRPE and ILF3. Interacts with GEMIN2; the interaction is direct. Interacts with GEMIN3; the interaction is direct. Interacts with GEMIN8; the interaction is direct. Interacts with SNRPB; the interaction is direct. Interacts (via Tudor domain) with SNRPD1 (via C-terminus); the interaction is direct. Interacts with SNRPD2; the interaction is direct. Interacts (via Tudor domain) with SNRPD3 (via C-terminus); the interaction is direct. Interacts with SNRPE; the interaction is direct. Interacts with OSTF1, LSM10, LSM11 and RPP20/POP7. Interacts (via C-terminal region) with ZPR1 (via C-terminal region). Interacts (via Tudor domain) with COIL. Interacts with SETX; recruits SETX to POLR2A. Interacts with POLR2A (via the C-terminal domain (CTD)). Interacts with PRMT5. Interacts with XRN2. Interacts (via C-terminus) with FMR1 (via C-terminus); the interaction is direct and occurs in a RNA-independent manner. Interacts (via Tudor domain) with SF3B2 ('Arg-508'-methylated form). Interacts with WRAP53/TCAB1. Interacts (via Tudor domain) with ELAVL4 in an RNA-independent manner; the interaction is required for localization of ELAVL4 to RNA granules. Interacts with FRG1.

It is found in the nucleus. Its subcellular location is the gem. The protein resides in the cajal body. It localises to the cytoplasm. The protein localises to the cytoplasmic granule. It is found in the perikaryon. Its subcellular location is the cell projection. The protein resides in the neuron projection. It localises to the axon. The protein localises to the myofibril. It is found in the sarcomere. Its subcellular location is the z line. In terms of biological role, the SMN complex catalyzes the assembly of small nuclear ribonucleoproteins (snRNPs), the building blocks of the spliceosome, and thereby plays an important role in the splicing of cellular pre-mRNAs. Most spliceosomal snRNPs contain a common set of Sm proteins SNRPB, SNRPD1, SNRPD2, SNRPD3, SNRPE, SNRPF and SNRPG that assemble in a heptameric protein ring on the Sm site of the small nuclear RNA to form the core snRNP (Sm core). In the cytosol, the Sm proteins SNRPD1, SNRPD2, SNRPE, SNRPF and SNRPG are trapped in an inactive 6S pICln-Sm complex by the chaperone CLNS1A that controls the assembly of the core snRNP. To assemble core snRNPs, the SMN complex accepts the trapped 5Sm proteins from CLNS1A forming an intermediate. Binding of snRNA inside 5Sm ultimately triggers eviction of the SMN complex, thereby allowing binding of SNRPD3 and SNRPB to complete assembly of the core snRNP. Within the SMN complex, SMN1 acts as a structural backbone and together with GEMIN2 it gathers the Sm complex subunits. Ensures the correct splicing of U12 intron-containing genes that may be important for normal motor and proprioceptive neurons development. Also required for resolving RNA-DNA hybrids created by RNA polymerase II, that form R-loop in transcription terminal regions, an important step in proper transcription termination. May also play a role in the metabolism of small nucleolar ribonucleoprotein (snoRNPs). This chain is Survival motor neuron protein (SMN1), found in Pongo abelii (Sumatran orangutan).